The sequence spans 154 residues: MSADTETASSRLALTVQRAIGAENRARSPTSALIRRWALAALRGDAEMTVRLVGEAEGRRLNRDYRGKDYATNVLTFVYDESERLAGDLVLCVPVVAREAAEQGKPLEAHFAHLIVHGMLHLQGFDHEAPDEAEEMETLETRVLATLGYPNPYA.

3 residues coordinate Zn(2+): His-117, His-121, and His-127.

Belongs to the endoribonuclease YbeY family. Zn(2+) serves as cofactor.

The protein localises to the cytoplasm. In terms of biological role, single strand-specific metallo-endoribonuclease involved in late-stage 70S ribosome quality control and in maturation of the 3' terminus of the 16S rRNA. The sequence is that of Endoribonuclease YbeY from Aromatoleum aromaticum (strain DSM 19018 / LMG 30748 / EbN1) (Azoarcus sp. (strain EbN1)).